The chain runs to 751 residues: WD repeat-containing protein 91 (751 aa).

A coiled-coil region spans residues 188 to 212 (IQEENESLRHKLFALQAESSRMKKE). Residues 264-395 (LSQSKKGPAR…ASSTESVGVR (132 aa)) are disordered. Positions 278–287 (SGASPTQTGS) are enriched in polar residues. The span at 334-346 (RLQEHGKERRELL) shows a compositional bias: basic and acidic residues. Over residues 377–391 (QAETSTKMPASSTES) the composition is skewed to polar residues. WD repeat units lie at residues 410–449 (EHHS…QTKA), 452–492 (ISKS…NLCE), 497–559 (EDMP…QQLQ), 564–603 (PEPI…CAMS), 606–645 (AHDG…LKIS), 668–706 (VQFP…KVLE), and 713–751 (GHRA…AQKS).

The protein belongs to the WD repeat WDR91 family.

Its subcellular location is the early endosome membrane. The protein localises to the late endosome membrane. In terms of biological role, functions as a negative regulator of the PI3 kinase/PI3K activity associated with endosomal membranes. By modifying the phosphatidylinositol 3-phosphate/PtdInsP3 content of endosomal membranes may regulate endosome fusion, recycling, sorting and early to late endosome transport. This is WD repeat-containing protein 91 from Gallus gallus (Chicken).